We begin with the raw amino-acid sequence, 327 residues long: GTP 3',8-cyclase (327 aa).

The Radical SAM core domain occupies 21-233 (SYGRRIRKLR…AKIQQKYSLK (213 aa)). Arg-30 is a GTP binding site. Cys-37 and Cys-41 together coordinate [4Fe-4S] cluster. Tyr-43 is an S-adenosyl-L-methionine binding site. [4Fe-4S] cluster is bound at residue Cys-44. Residue Arg-79 coordinates GTP. Gly-83 is a binding site for S-adenosyl-L-methionine. GTP is bound at residue Thr-109. Position 133 (Ser-133) interacts with S-adenosyl-L-methionine. Residue Lys-169 participates in GTP binding. An S-adenosyl-L-methionine-binding site is contributed by Met-203. The [4Fe-4S] cluster site is built by Cys-265 and Cys-268. A GTP-binding site is contributed by 270–272 (RWR). Cys-282 contacts [4Fe-4S] cluster.

The protein belongs to the radical SAM superfamily. MoaA family. As to quaternary structure, monomer and homodimer. [4Fe-4S] cluster serves as cofactor.

It carries out the reaction GTP + AH2 + S-adenosyl-L-methionine = (8S)-3',8-cyclo-7,8-dihydroguanosine 5'-triphosphate + 5'-deoxyadenosine + L-methionine + A + H(+). It participates in cofactor biosynthesis; molybdopterin biosynthesis. Catalyzes the cyclization of GTP to (8S)-3',8-cyclo-7,8-dihydroguanosine 5'-triphosphate. This chain is GTP 3',8-cyclase, found in Synechocystis sp. (strain ATCC 27184 / PCC 6803 / Kazusa).